The primary structure comprises 860 residues: Leucine--tRNA ligase (860 aa).

Residues 42-52 carry the 'HIGH' region motif; sequence PYPSGRLHMGH. Positions 619–623 match the 'KMSKS' region motif; it reads KMSKS. K622 contacts ATP.

The protein belongs to the class-I aminoacyl-tRNA synthetase family.

The protein localises to the cytoplasm. The enzyme catalyses tRNA(Leu) + L-leucine + ATP = L-leucyl-tRNA(Leu) + AMP + diphosphate. This Salmonella choleraesuis (strain SC-B67) protein is Leucine--tRNA ligase.